Here is a 350-residue protein sequence, read N- to C-terminus: Methionine import ATP-binding protein MetN 1 (350 aa).

The 240-residue stretch at 12-251 (IDLKNITVLF…PSREVTQDFV (240 aa)) folds into the ABC transporter domain. 48–55 (GYSGAGKS) provides a ligand contact to ATP.

It belongs to the ABC transporter superfamily. Methionine importer (TC 3.A.1.24) family. The complex is composed of two ATP-binding proteins (MetN), two transmembrane proteins (MetI) and a solute-binding protein (MetQ).

The protein localises to the cell membrane. It catalyses the reaction L-methionine(out) + ATP + H2O = L-methionine(in) + ADP + phosphate + H(+). The catalysed reaction is D-methionine(out) + ATP + H2O = D-methionine(in) + ADP + phosphate + H(+). Functionally, part of the ABC transporter complex MetNIQ involved in methionine import. Responsible for energy coupling to the transport system. This is Methionine import ATP-binding protein MetN 1 from Oenococcus oeni (strain ATCC BAA-331 / PSU-1).